We begin with the raw amino-acid sequence, 453 residues long: Dibenzothiophene-sulfone monooxygenase (453 aa).

FMN-binding residues include Asp-59, Thr-106, His-156, Tyr-160, and Ser-231.

This sequence belongs to the NtaA/SnaA/DszA monooxygenase family. Homodimer.

It localises to the cytoplasm. The catalysed reaction is dibenzothiophene 5,5-dioxide + FMNH2 + NADH + O2 = 2'-hydroxybiphenyl-2-sulfinate + FMN + NAD(+) + H2O + H(+). The protein operates within sulfur metabolism; dibenzothiophene degradation. Its function is as follows. Catalyzes the second step of the '4S' desulfurization pathway that removes covalently bound sulfur from dibenzothiophene (DBT) without breaking carbon-carbon bonds. Metabolizes DBT-sulfone (DBTO2 or DBT 5,5-dioxide) to 2-(2'-hydroxyphenyl)benzene sulphinate (HBPS). The protein is Dibenzothiophene-sulfone monooxygenase of Rhodococcus erythropolis (Arthrobacter picolinophilus).